We begin with the raw amino-acid sequence, 1057 residues long: Carbamoyl phosphate synthase large chain (1057 aa).

Positions 1-401 are carboxyphosphate synthetic domain; the sequence is MPKRDDIKTI…SLLKAIRSLE (401 aa). 12 residues coordinate ATP: Arg-129, Arg-169, Gly-175, Gly-176, Lys-208, Ile-210, Glu-215, Gly-241, Ile-242, His-243, Gln-284, and Glu-298. Residues 133-327 form the ATP-grasp 1 domain; that stretch reads RTLMNDLNVP…IAKLAAKIAV (195 aa). Residues Gln-284, Glu-298, and Asn-300 each contribute to the Mg(2+) site. The Mn(2+) site is built by Gln-284, Glu-298, and Asn-300. Positions 402–546 are oligomerization domain; the sequence is YGVHHLGLSN…YGTYEYENES (145 aa). Residues 547–929 form a carbamoyl phosphate synthetic domain region; that stretch reads IVTDKEKILV…ALYKGLTGSG (383 aa). In terms of domain architecture, ATP-grasp 2 spans 671–861; that stretch reads EALLREIAVP…MAQLAMRAIM (191 aa). ATP is bound by residues Arg-707, Arg-746, Leu-748, Glu-752, Gly-777, Val-778, His-779, Ser-780, Gln-820, and Glu-832. Positions 820, 832, and 834 each coordinate Mg(2+). Mn(2+) contacts are provided by Gln-820, Glu-832, and Asn-834. One can recognise an MGS-like domain in the interval 930 to 1057; it reads FEVKDHGTVL…ESMTFTMRNV (128 aa). Positions 930–1057 are allosteric domain; the sequence is FEVKDHGTVL…ESMTFTMRNV (128 aa).

It belongs to the CarB family. In terms of assembly, composed of two chains; the small (or glutamine) chain promotes the hydrolysis of glutamine to ammonia, which is used by the large (or ammonia) chain to synthesize carbamoyl phosphate. Tetramer of heterodimers (alpha,beta)4. The cofactor is Mg(2+). Mn(2+) serves as cofactor.

It carries out the reaction hydrogencarbonate + L-glutamine + 2 ATP + H2O = carbamoyl phosphate + L-glutamate + 2 ADP + phosphate + 2 H(+). The enzyme catalyses hydrogencarbonate + NH4(+) + 2 ATP = carbamoyl phosphate + 2 ADP + phosphate + 2 H(+). Its pathway is amino-acid biosynthesis; L-arginine biosynthesis; carbamoyl phosphate from bicarbonate: step 1/1. It functions in the pathway pyrimidine metabolism; UMP biosynthesis via de novo pathway; (S)-dihydroorotate from bicarbonate: step 1/3. Large subunit of the glutamine-dependent carbamoyl phosphate synthetase (CPSase). CPSase catalyzes the formation of carbamoyl phosphate from the ammonia moiety of glutamine, carbonate, and phosphate donated by ATP, constituting the first step of 2 biosynthetic pathways, one leading to arginine and/or urea and the other to pyrimidine nucleotides. The large subunit (synthetase) binds the substrates ammonia (free or transferred from glutamine from the small subunit), hydrogencarbonate and ATP and carries out an ATP-coupled ligase reaction, activating hydrogencarbonate by forming carboxy phosphate which reacts with ammonia to form carbamoyl phosphate. The sequence is that of Carbamoyl phosphate synthase large chain from Staphylococcus epidermidis (strain ATCC 12228 / FDA PCI 1200).